The primary structure comprises 91 residues: Putative septation protein SpoVG (91 aa).

The protein belongs to the SpoVG family.

Could be involved in septation. This Clostridium botulinum (strain Alaska E43 / Type E3) protein is Putative septation protein SpoVG.